The sequence spans 69 residues: M-poneratoxin-Dq4e (69 aa).

Positions 1-25 (MKLSAFTLAFALILMMAIMYNMAEA) are cleaved as a signal peptide. A propeptide spanning residues 26-39 (AALADADADAEAIA) is cleaved from the precursor.

Expressed by the venom gland.

The protein resides in the secreted. May have antimicrobial properties, like most ant linear peptides. In addition, when tested in vitro on the parasite Trypanosoma cruzi (responsible of the Chagas disease), is able to moderately reduce the number of the three forms (epimastigote, trypomastigote and amastigote) by inducing cell death through necrosis. The protein is M-poneratoxin-Dq4e of Dinoponera quadriceps (South American ant).